A 146-amino-acid chain; its full sequence is Mitochondrial import receptor subunit TOM20 homolog B (146 aa).

The Mitochondrial intermembrane segment spans residues 1–5; sequence MMGGS. Residues 6–25 form a helical membrane-spanning segment; that stretch reads SSRIAAGLGAALFVGYCIYF. Residues 26 to 146 lie on the Cytoplasmic side of the membrane; it reads DRKRRSDPNY…AQSISDDDIE (121 aa). Positions 37-47 are enriched in basic residues; sequence NKLRERRKKQK. The interval 37 to 56 is disordered; it reads NKLRERRKKQKAAQEKAGLS. Ser141 carries the phosphoserine modification.

Belongs to the Tom20 family. As to quaternary structure, forms part of the preprotein translocase complex of the outer mitochondrial membrane (TOM complex). Interacts with tom22.

It is found in the mitochondrion outer membrane. Functionally, central component of the receptor complex responsible for the recognition and translocation of cytosolically synthesized mitochondrial preproteins. Together with tom22 functions as the transit peptide receptor at the surface of the mitochondrion outer membrane and facilitates the movement of preproteins into the tom40 translocation pore. This Danio rerio (Zebrafish) protein is Mitochondrial import receptor subunit TOM20 homolog B (tomm20b).